Consider the following 473-residue polypeptide: Photosystem II CP43 reaction center protein (473 aa).

Residues 1–14 constitute a propeptide that is removed on maturation; the sequence is MKTLYSLRRFYPVE. Thr-15 is subject to N-acetylthreonine. Residue Thr-15 is modified to Phosphothreonine. 5 helical membrane-spanning segments follow: residues 69–93, 134–155, 178–200, 255–275, and 291–312; these read LFEVAHFVPEKPMYEQGLILLPHLA, LLGPETLEESFPFFGYVWKDRN, KALYFGGVYDTWAPGGGDVRKIT, KPFAWARRAFVWSGEAYLSYS, and WFNNTAYPSEFYGPTGPEASQA. Glu-367 contacts [CaMn4O5] cluster. Residues 447-471 traverse the membrane as a helical segment; it reads RARAAAAGFEKGIDRDLEPVLSMTP.

It belongs to the PsbB/PsbC family. PsbC subfamily. As to quaternary structure, PSII is composed of 1 copy each of membrane proteins PsbA, PsbB, PsbC, PsbD, PsbE, PsbF, PsbH, PsbI, PsbJ, PsbK, PsbL, PsbM, PsbT, PsbX, PsbY, PsbZ, Psb30/Ycf12, at least 3 peripheral proteins of the oxygen-evolving complex and a large number of cofactors. It forms dimeric complexes. Binds multiple chlorophylls and provides some of the ligands for the Ca-4Mn-5O cluster of the oxygen-evolving complex. It may also provide a ligand for a Cl- that is required for oxygen evolution. PSII binds additional chlorophylls, carotenoids and specific lipids. serves as cofactor.

Its subcellular location is the plastid. The protein localises to the chloroplast thylakoid membrane. Its function is as follows. One of the components of the core complex of photosystem II (PSII). It binds chlorophyll and helps catalyze the primary light-induced photochemical processes of PSII. PSII is a light-driven water:plastoquinone oxidoreductase, using light energy to abstract electrons from H(2)O, generating O(2) and a proton gradient subsequently used for ATP formation. In Dioscorea elephantipes (Elephant's foot yam), this protein is Photosystem II CP43 reaction center protein.